The chain runs to 164 residues: Elicitin-like protein 2 (164 aa).

The first 22 residues, 1-22, serve as a signal peptide directing secretion; sequence MFSKTLVVLAAVAAVTVNGLTA. 3 cysteine pairs are disulfide-bonded: C25/C91, C47/C76, and C71/C118. A disordered region spans residues 121–164; sequence ISGGGSTPTTAPPSGTTPTTPTTAPPTGTTPGVTPSPTTPKPAC. A compositionally biased stretch (low complexity) spans 127 to 156; sequence TPTTAPPSGTTPTTPTTAPPTGTTPGVTPS.

Belongs to the elicitin family.

The protein localises to the secreted. Induces local and distal defense responses (incompatible hypersensitive reaction) in plants from the solanaceae and cruciferae families. Elicits leaf necrosis and causes the accumulation of pathogenesis-related proteins. Might interact with the lipidic molecules of the plasma membrane. The protein is Elicitin-like protein 2 (POD-2) of Pythium oligandrum (Mycoparasitic fungus).